Consider the following 236-residue polypeptide: Small ribosomal subunit protein uS2c (236 aa).

Belongs to the universal ribosomal protein uS2 family.

Its subcellular location is the plastid. The protein resides in the chloroplast. This Lactuca sativa (Garden lettuce) protein is Small ribosomal subunit protein uS2c (rps2).